We begin with the raw amino-acid sequence, 389 residues long: Probable dual-specificity RNA methyltransferase RlmN (389 aa).

The active-site Proton acceptor is Glu114. The Radical SAM core domain occupies 120–358; the sequence is QHYGLSVCVT…CVVRQEHGTD (239 aa). Cys127 and Cys363 form a disulfide bridge. The [4Fe-4S] cluster site is built by Cys134, Cys138, and Cys141. S-adenosyl-L-methionine is bound by residues 186-187, Ser218, 241-243, and Asn319; these read GE and SLH. The S-methylcysteine intermediate role is filled by Cys363. The segment at 370–389 is disordered; sequence TMKRDRQKAVAEASGKSEGK. Basic and acidic residues predominate over residues 371–389; it reads MKRDRQKAVAEASGKSEGK.

Belongs to the radical SAM superfamily. RlmN family. [4Fe-4S] cluster is required as a cofactor.

The protein localises to the cytoplasm. It carries out the reaction adenosine(2503) in 23S rRNA + 2 reduced [2Fe-2S]-[ferredoxin] + 2 S-adenosyl-L-methionine = 2-methyladenosine(2503) in 23S rRNA + 5'-deoxyadenosine + L-methionine + 2 oxidized [2Fe-2S]-[ferredoxin] + S-adenosyl-L-homocysteine. The catalysed reaction is adenosine(37) in tRNA + 2 reduced [2Fe-2S]-[ferredoxin] + 2 S-adenosyl-L-methionine = 2-methyladenosine(37) in tRNA + 5'-deoxyadenosine + L-methionine + 2 oxidized [2Fe-2S]-[ferredoxin] + S-adenosyl-L-homocysteine. Functionally, specifically methylates position 2 of adenine 2503 in 23S rRNA and position 2 of adenine 37 in tRNAs. The sequence is that of Probable dual-specificity RNA methyltransferase RlmN from Streptococcus thermophilus (strain CNRZ 1066).